A 1126-amino-acid chain; its full sequence is Protein translocase subunit SecA (1126 aa).

ATP-binding positions include Gln175, 193–197 (GEGKT), and Asp694. A disordered region spans residues 1060–1126 (VQEAAPEKHE…KYKNCHGQGL (67 aa)). Over residues 1064–1080 (APEKHEDMSRYRTEKTD) the composition is skewed to basic and acidic residues. Zn(2+) contacts are provided by Cys1110, Cys1112, Cys1121, and His1122.

The protein belongs to the SecA family. Monomer and homodimer. Part of the essential Sec protein translocation apparatus which comprises SecA, SecYEG and auxiliary proteins SecDF. Other proteins may also be involved. Zn(2+) serves as cofactor.

It localises to the cell inner membrane. The protein localises to the cytoplasm. It carries out the reaction ATP + H2O + cellular proteinSide 1 = ADP + phosphate + cellular proteinSide 2.. Part of the Sec protein translocase complex. Interacts with the SecYEG preprotein conducting channel. Has a central role in coupling the hydrolysis of ATP to the transfer of proteins into and across the cell membrane, serving as an ATP-driven molecular motor driving the stepwise translocation of polypeptide chains across the membrane. This is Protein translocase subunit SecA from Parabacteroides distasonis (strain ATCC 8503 / DSM 20701 / CIP 104284 / JCM 5825 / NCTC 11152).